The chain runs to 177 residues: Putative peroxiredoxin (177 aa).

The region spanning 8–177 is the Thioredoxin domain; that stretch reads TAKGNEIPDT…ASIDTILTKV (170 aa). Residue cysteine 64 is the Cysteine sulfenic acid (-SOH) intermediate of the active site. The Microbody targeting signal motif lies at 175–177; that stretch reads TKV.

The protein belongs to the peroxiredoxin family. Prx5 subfamily. As to quaternary structure, homodimer; disulfide-linked, upon oxidation.

The catalysed reaction is a hydroperoxide + [thioredoxin]-dithiol = an alcohol + [thioredoxin]-disulfide + H2O. In terms of biological role, thiol-specific peroxidase that catalyzes the reduction of hydrogen peroxide and organic hydroperoxides to water and alcohols, respectively. Plays a role in cell protection against oxidative stress by detoxifying peroxides and as sensor of hydrogen peroxide-mediated signaling events. In Malassezia furfur (Pityriasis versicolor infection agent), this protein is Putative peroxiredoxin.